A 104-amino-acid polypeptide reads, in one-letter code: 11 kDa late embryogenesis abundant protein (104 aa).

The segment covering 1–24 has biased composition (low complexity); the sequence is MQSGKNAAASAKETAANVAASAKA. Residues 1–104 are disordered; that stretch reads MQSGKNAAAS…TGHRTGTGGI (104 aa). A compositionally biased stretch (basic and acidic residues) spans 25-74; that stretch reads GMEKTKASLQEKGEKMTAHDPMQKEMAREKKEERKHEAEYEKQAAKEHNA. Polar residues predominate over residues 75–89; sequence AQKQTTGIGTGTHSY.

This sequence belongs to the LEA type 1 family. As to expression, maximally expressed in dry seeds. Also present in mid-maturation embryos.

Functionally, LEA proteins are late embryonic proteins abundant in higher plant seed embryos. They may play an essential role in seed survival and in controlling water exchanges during seed desiccation and imbibition. The sequence is that of 11 kDa late embryogenesis abundant protein from Helianthus annuus (Common sunflower).